Reading from the N-terminus, the 380-residue chain is GDP-mannose:cellobiosyl-diphosphopolyprenol alpha-mannosyltransferase (380 aa).

Belongs to the glycosyltransferase group 1 family. Glycosyltransferase 4 subfamily.

It carries out the reaction beta-D-Glc-(1-&gt;4)-alpha-D-Glc-di-trans,octa-cis-undecaprenyl diphosphate + GDP-alpha-D-mannose = alpha-D-Man-(1-&gt;3)-beta-D-Glc-(1-&gt;4)-alpha-D-Glc-1-di-trans,octa-cis-undecaprenyl diphosphate + GDP + H(+). Its function is as follows. Involved in the biosynthesis of the exopolysaccharide xanthan, a polymer that is comprised of repeating pentasaccharide units with the structure of a beta-(1,4)-linked D-glucose backbone with trisaccharide side chains composed of mannose-beta-(1,4)-glucuronic acid-beta-(1,2)-mannose attached to alternate glucose residues in the backbone by alpha-(1,3) linkages. Xanthan is involved in pathogenicity but has also been used in a variety of applications as a specialty polymer for commercial applications, including food additives, where they act as viscosifying, stabilizing, emulsifying, or gelling agents. The sequence is that of GDP-mannose:cellobiosyl-diphosphopolyprenol alpha-mannosyltransferase (gumH) from Xanthomonas oryzae pv. oryzae (strain PXO99A).